The primary structure comprises 385 residues: Mannitol-1-phosphate 5-dehydrogenase (385 aa).

3-14 (ALQFGAGNIGRG) contacts NAD(+).

It belongs to the mannitol dehydrogenase family.

It carries out the reaction D-mannitol 1-phosphate + NAD(+) = beta-D-fructose 6-phosphate + NADH + H(+). The polypeptide is Mannitol-1-phosphate 5-dehydrogenase (Buchnera aphidicola subsp. Acyrthosiphon pisum (strain 5A)).